Reading from the N-terminus, the 435-residue chain is ATP-dependent protease ATPase subunit HslU (435 aa).

ATP is bound by residues Ile18, 60 to 65, Asp248, Glu313, and Arg385; that span reads GVGKTE.

It belongs to the ClpX chaperone family. HslU subfamily. In terms of assembly, a double ring-shaped homohexamer of HslV is capped on each side by a ring-shaped HslU homohexamer. The assembly of the HslU/HslV complex is dependent on binding of ATP.

The protein localises to the cytoplasm. Its function is as follows. ATPase subunit of a proteasome-like degradation complex; this subunit has chaperone activity. The binding of ATP and its subsequent hydrolysis by HslU are essential for unfolding of protein substrates subsequently hydrolyzed by HslV. HslU recognizes the N-terminal part of its protein substrates and unfolds these before they are guided to HslV for hydrolysis. This Ruegeria pomeroyi (strain ATCC 700808 / DSM 15171 / DSS-3) (Silicibacter pomeroyi) protein is ATP-dependent protease ATPase subunit HslU.